A 127-amino-acid chain; its full sequence is MARIAGVDLPRDKRVEIALTYLYGVGLSRSQEVLSATGVNPDTRVKDLSDEDVAALRTYIETNYQIEGDLRRWEAMNIKRLADIGTYRGRRHRLGLPVRGQRTRTNARTRRGRRVTVAGKKKAPSKK.

Positions 97–127 are disordered; the sequence is PVRGQRTRTNARTRRGRRVTVAGKKKAPSKK. Residues 101-127 show a composition bias toward basic residues; it reads QRTRTNARTRRGRRVTVAGKKKAPSKK.

Belongs to the universal ribosomal protein uS13 family. Part of the 30S ribosomal subunit. Forms a loose heterodimer with protein S19. Forms two bridges to the 50S subunit in the 70S ribosome.

Located at the top of the head of the 30S subunit, it contacts several helices of the 16S rRNA. In the 70S ribosome it contacts the 23S rRNA (bridge B1a) and protein L5 of the 50S subunit (bridge B1b), connecting the 2 subunits; these bridges are implicated in subunit movement. Contacts the tRNAs in the A and P-sites. The polypeptide is Small ribosomal subunit protein uS13 (Microcystis aeruginosa (strain NIES-843 / IAM M-2473)).